Here is a 231-residue protein sequence, read N- to C-terminus: Small ribosomal subunit protein uS3 (231 aa).

The KH type-2 domain occupies Ile39–Lys108.

The protein belongs to the universal ribosomal protein uS3 family. Part of the 30S ribosomal subunit. Forms a tight complex with proteins S10 and S14.

Binds the lower part of the 30S subunit head. Binds mRNA in the 70S ribosome, positioning it for translation. The polypeptide is Small ribosomal subunit protein uS3 (Aquifex pyrophilus).